Consider the following 433-residue polypeptide: Acetyl-CoA acetyltransferase erg10A, mitochondrial (433 aa).

Residues 1-34 constitute a mitochondrion transit peptide; sequence MAIQTTTGLAARLVAKRATFPASRRNFSASRSAL. The active-site Acyl-thioester intermediate is the Cys124. Tyr219 lines the K(+) pocket. CoA-binding residues include Asn229 and Lys262. A K(+)-binding site is contributed by Ala280. Ser284 is a CoA binding site. Active-site proton acceptor residues include His387 and Cys415. Asn416 contacts chloride.

The protein belongs to the thiolase-like superfamily. Thiolase family. As to quaternary structure, homotetramer. K(+) is required as a cofactor.

Its subcellular location is the mitochondrion. It carries out the reaction 2 acetyl-CoA = acetoacetyl-CoA + CoA. The protein operates within metabolic intermediate biosynthesis; (R)-mevalonate biosynthesis; (R)-mevalonate from acetyl-CoA: step 1/3. Functionally, mitochondrial acetyl-CoA acetyltransferase that catalyzes both the formation and degradation of acetoacetyl-CoA. Has no overlapping function with erg10B and seems not to be involved in ergosterol biosynthesis. Plays an important role in growth, morphogenesis and maintaining mitochondrial function including the response to oxidative stresses. This chain is Acetyl-CoA acetyltransferase erg10A, mitochondrial, found in Aspergillus fumigatus (strain ATCC MYA-4609 / CBS 101355 / FGSC A1100 / Af293) (Neosartorya fumigata).